Here is a 195-residue protein sequence, read N- to C-terminus: U8 snoRNA-decapping enzyme (195 aa).

The region spanning 18–168 (GWRHACHALL…LENTFIGNAR (151 aa)) is the Nudix hydrolase domain. Substrate is bound by residues histidine 24, arginine 50, and phenylalanine 57. 4 residues coordinate Mn(2+): glycine 59, glutamate 76, glutamate 80, and histidine 99. Residues 61–82 (FVDLRDGSLEDGLNRELGEELG) carry the Nudix box motif. Substrate contacts are provided by asparagine 166 and glutamine 170. A Mn(2+)-binding site is contributed by glutamate 173.

Belongs to the Nudix hydrolase family. NUDT16 subfamily. In terms of assembly, homodimer. Requires Mg(2+) as cofactor. It depends on Mn(2+) as a cofactor. Co(2+) serves as cofactor.

It is found in the nucleus. It localises to the nucleolus. The protein resides in the nucleoplasm. The protein localises to the cytoplasm. The enzyme catalyses a 5'-end (N(7)-methyl 5'-triphosphoguanosine)-ribonucleoside in mRNA + H2O = N(7)-methyl-GDP + a 5'-end phospho-ribonucleoside in mRNA + 2 H(+). It carries out the reaction IDP + H2O = IMP + phosphate + H(+). It catalyses the reaction dIDP + H2O = dIMP + phosphate + H(+). The catalysed reaction is a 5'-end NAD(+)-phospho-ribonucleoside in mRNA + H2O = a 5'-end phospho-ribonucleoside in mRNA + NAD(+) + H(+). The enzyme catalyses a 5'-end FAD-phospho-ribonucleoside in mRNA + H2O = a 5'-end phospho-adenosine-phospho-ribonucleoside in mRNA + FMN + 2 H(+). It carries out the reaction a 5'-end CoA-ribonucleoside in mRNA + H2O = a 5'-end phospho-adenosine-phospho-ribonucleoside in mRNA + (R)-4'-phosphopantetheine + 2 H(+). In terms of biological role, RNA-binding and decapping enzyme that catalyzes the cleavage of the cap structure of snoRNAs and mRNAs in a metal-dependent manner. Part of the U8 snoRNP complex that is required for the accumulation of mature 5.8S and 28S rRNA. Has diphosphatase activity and removes m7G and/or m227G caps from U8 snoRNA and leaves a 5'monophosphate on the RNA. Also catalyzes the cleavage of the cap structure on mRNAs. Does not hydrolyze cap analog structures like 7-methylguanosine nucleoside triphosphate (m7GpppG). Also hydrolysis m7G- and m227G U3-capped RNAs but with less efficiencies. Has broad substrate specificity with manganese or cobalt as cofactor and can act on various RNA species. Binds to the U8 snoRNA; metal is not required for RNA-binding. May play a role in the regulation of snoRNAs and mRNAs degradation. Also acts as a phosphatase; hydrolyzes the non-canonical purine nucleotides inosine diphosphate (IDP) and deoxyinosine diphosphate (dITP) as well as guanosine diphosphate (GDP), deoxyguanosine diphosphate (dGDP), xanthine diphosphate (XDP), inosine triphosphate (ITP) and deoxyinosine triphosphate (ITP) to their respective monophosphate derivatives and does not distinguish between the deoxy- and ribose forms. The order of activity with different substrates is IDP &gt; dIDP &gt;&gt; GDP = dGDP &gt; XDP = ITP = dITP. Binds strongly to GTP, ITP and XTP. Participates in the hydrolysis of dIDP/IDP and probably excludes non-canonical purines from RNA and DNA precursor pools, thus preventing their incorporation into RNA and DNA and avoiding chromosomal lesions. Exhibits decapping activity towards NAD-capped RNAs and FAD-capped RNAs. Exhibits decapping activity towards dpCoA-capped RNAs in vitro. The polypeptide is U8 snoRNA-decapping enzyme (NUDT16) (Bos taurus (Bovine)).